A 493-amino-acid polypeptide reads, in one-letter code: Transmembrane protein 184 homolog DDB_G0284525 (493 aa).

Residues 1–10 are compositionally biased toward polar residues; sequence MTQESSSSNH. Residues 1–25 are disordered; that stretch reads MTQESSSSNHYVDESSFDNNNNNNN. The next 7 helical transmembrane spans lie at 46-66, 87-107, 119-139, 180-200, 212-232, 254-274, and 293-313; these read VPALYAMFALASLFVLLATIL, IVRIVFMIPIYAIYSLLSLLL, DCYEAYVLYMFFALCVSYGGG, YVLVRPAVTLASAIFEIFGLY, FYNAFIINVSVTVALYIVVLF, IVVFFCFWQSIAISGMTNFGW, and FLICFEMFGVAILHQYAFPYE. N-linked (GlcNAc...) asparagine glycans are attached at residues Asn-415 and Asn-416.

It belongs to the TMEM184 family.

It is found in the cell membrane. Its function is as follows. Probable transporter. The protein is Transmembrane protein 184 homolog DDB_G0284525 (tmem184A) of Dictyostelium discoideum (Social amoeba).